A 331-amino-acid polypeptide reads, in one-letter code: Ketol-acid reductoisomerase (NADP(+)) (331 aa).

A KARI N-terminal Rossmann domain is found at 1–182; sequence MATLYYDTDA…GGTRAGILET (182 aa). NADP(+) is bound by residues 25–28, Ser51, Ser53, and 83–86; these read YGSQ and DEFQ. His108 is an active-site residue. Gly134 serves as a coordination point for NADP(+). The region spanning 183–328 is the KARI C-terminal knotted domain; that stretch reads NFKEETETDL…KGLRAMFSWL (146 aa). Positions 191, 195, 227, and 231 each coordinate Mg(2+). Ser252 is a substrate binding site.

It belongs to the ketol-acid reductoisomerase family. Requires Mg(2+) as cofactor.

The enzyme catalyses (2R)-2,3-dihydroxy-3-methylbutanoate + NADP(+) = (2S)-2-acetolactate + NADPH + H(+). It carries out the reaction (2R,3R)-2,3-dihydroxy-3-methylpentanoate + NADP(+) = (S)-2-ethyl-2-hydroxy-3-oxobutanoate + NADPH + H(+). It functions in the pathway amino-acid biosynthesis; L-isoleucine biosynthesis; L-isoleucine from 2-oxobutanoate: step 2/4. It participates in amino-acid biosynthesis; L-valine biosynthesis; L-valine from pyruvate: step 2/4. In terms of biological role, involved in the biosynthesis of branched-chain amino acids (BCAA). Catalyzes an alkyl-migration followed by a ketol-acid reduction of (S)-2-acetolactate (S2AL) to yield (R)-2,3-dihydroxy-isovalerate. In the isomerase reaction, S2AL is rearranged via a Mg-dependent methyl migration to produce 3-hydroxy-3-methyl-2-ketobutyrate (HMKB). In the reductase reaction, this 2-ketoacid undergoes a metal-dependent reduction by NADPH to yield (R)-2,3-dihydroxy-isovalerate. This chain is Ketol-acid reductoisomerase (NADP(+)), found in Synechococcus sp. (strain RCC307).